The primary structure comprises 311 residues: Probable manganese-dependent inorganic pyrophosphatase (311 aa).

Residues His9, Asp13, Asp15, Asp75, His97, and Asp149 each contribute to the Mn(2+) site.

This sequence belongs to the PPase class C family. Mn(2+) is required as a cofactor.

Its subcellular location is the cytoplasm. The catalysed reaction is diphosphate + H2O = 2 phosphate + H(+). The protein is Probable manganese-dependent inorganic pyrophosphatase of Shouchella clausii (strain KSM-K16) (Alkalihalobacillus clausii).